Reading from the N-terminus, the 638-residue chain is Zinc finger protein 143 (638 aa).

An N-acetylmethionine modification is found at Met1. Residue Lys213 forms a Glycyl lysine isopeptide (Lys-Gly) (interchain with G-Cter in SUMO2) linkage. 4 consecutive C2H2-type zinc fingers follow at residues 237-261 (FRCKYDGCGKLYTTAHHLKVHERSH), 267-291 (YQCEHSGCGKAFATGYGLKSHFRTH), 297-321 (YRCSEDNCTKSFKTSGDLQKHIRTH), and 327-351 (FKCPIEGCGRSFTTSNIRKVHIRTH). Residue Thr352 is modified to Phosphothreonine. C2H2-type zinc fingers lie at residues 357–381 (YYCTEPGCGRAFASATNYKNHVRIH), 387–411 (YVCTVPGCDKRFTEYSSLYKHHVVH), and 417–440 (YNCNHCGKTYKQISTLAMHKRTAH). Residue Lys406 forms a Glycyl lysine isopeptide (Lys-Gly) (interchain with G-Cter in SUMO2) linkage.

Belongs to the GLI C2H2-type zinc-finger protein family. Interacts with CHD8. Forms a complex with HCFC1 and ZNF143.

It localises to the nucleus. Its function is as follows. Transcriptional activator. In complex with HCFC1 and ZNF143, regulates the expression of several genes, including AP2S1, ESCO2, OPHN1, RBL1, UBXN8 and ZNF32. Activates the gene for selenocysteine tRNA (tRNAsec). Binds to the SPH motif of small nuclear RNA (snRNA) gene promoters. Participates in efficient U6 RNA polymerase III transcription via its interaction with CHD8. This Rattus norvegicus (Rat) protein is Zinc finger protein 143 (Znf143).